The sequence spans 23 residues: Caerin-4.3 (23 aa).

As to expression, expressed by the skin parotoid and/or rostral glands.

The protein localises to the secreted. In terms of biological role, antibacterial peptide, that adopts an alpha helical conformation which can disrupt bacterial membranes. Each caerin displays a different antimicrobial specificity. The protein is Caerin-4.3 of Ranoidea caerulea (Green tree frog).